The sequence spans 188 residues: Elongation factor P (188 aa).

Belongs to the elongation factor P family.

It is found in the cytoplasm. The protein operates within protein biosynthesis; polypeptide chain elongation. In terms of biological role, involved in peptide bond synthesis. Stimulates efficient translation and peptide-bond synthesis on native or reconstituted 70S ribosomes in vitro. Probably functions indirectly by altering the affinity of the ribosome for aminoacyl-tRNA, thus increasing their reactivity as acceptors for peptidyl transferase. The polypeptide is Elongation factor P (Wolbachia sp. subsp. Drosophila simulans (strain wRi)).